We begin with the raw amino-acid sequence, 214 residues long: Alpha-S1-casein (214 aa).

A signal peptide spans 1 to 15 (MKLLILTCLVAVALA). Ser-27 is subject to Phosphoserine; in allele A. Ser-56 is subject to Phosphoserine; in allele C. Residues Ser-61 and Ser-63 each carry the phosphoserine modification. A disordered region spans residues 69–91 (MEDAKQMKAGSSSSSEEIVPNSA). The residue at position 79 (Ser-79) is a Phosphoserine; in alleles A and C. Residue Ser-80 is modified to Phosphoserine. Residue Ser-81 is modified to Phosphoserine; in alleles A and C. Ser-82 is modified (phosphoserine). Ser-83 carries the post-translational modification Phosphoserine; in alleles A and C. Ser-90 bears the Phosphoserine mark. The interval 105–111 (RYLGYLE) is opioid-like peptide sequence. Phosphoserine is present on Ser-130.

This sequence belongs to the alpha-casein family. In terms of tissue distribution, mammary gland specific. Secreted in milk.

It localises to the secreted. Its function is as follows. Important role in the capacity of milk to transport calcium phosphate. This is Alpha-S1-casein (CSN1S1) from Ovis aries (Sheep).